Here is a 155-residue protein sequence, read N- to C-terminus: 3-dehydroquinate dehydratase (155 aa).

Tyr22 (proton acceptor) is an active-site residue. Substrate contacts are provided by Asn73, His79, and Asp86. The active-site Proton donor is the His99. Substrate contacts are provided by residues 100–101 and Arg110; that span reads IS.

It belongs to the type-II 3-dehydroquinase family. In terms of assembly, homododecamer.

It catalyses the reaction 3-dehydroquinate = 3-dehydroshikimate + H2O. The protein operates within metabolic intermediate biosynthesis; chorismate biosynthesis; chorismate from D-erythrose 4-phosphate and phosphoenolpyruvate: step 3/7. Catalyzes a trans-dehydration via an enolate intermediate. In Campylobacter hominis (strain ATCC BAA-381 / DSM 21671 / CCUG 45161 / LMG 19568 / NCTC 13146 / CH001A), this protein is 3-dehydroquinate dehydratase.